Consider the following 55-residue polypeptide: Large ribosomal subunit protein bL33 (55 aa).

It belongs to the bacterial ribosomal protein bL33 family.

In Bordetella avium (strain 197N), this protein is Large ribosomal subunit protein bL33.